The chain runs to 436 residues: Na(+)/H(+) antiporter NhaA (436 aa).

11 helical membrane passes run 14–34 (AGGIVLIAATILTLILSNSTW), 59–79 (LHHWINDGLMAVFFFVVGLEL), 95–115 (ALPVIAALGGMLAPALIYHQF), 125–145 (WGIPMATDIAFAIGILVLLAW), 152–172 (IIFLTALAIADDLGAVLVIAI), 176–196 (PALHIKALMIAALLLLALLLF), 214–234 (FWYFVILSGIHATVAGIFLAF), 300–320 (AIQPWVTFAVLPVFALANAGI), 336–356 (IGTCLGLVLGKFLGIGLSSWL), 374–394 (LLGAAWLGGIGFTMSLFIGQL), and 407–427 (LGILLASLIAASIGLLWLFQV).

This sequence belongs to the NhaA Na(+)/H(+) (TC 2.A.33) antiporter family.

It is found in the cell inner membrane. It carries out the reaction Na(+)(in) + 2 H(+)(out) = Na(+)(out) + 2 H(+)(in). In terms of biological role, na(+)/H(+) antiporter that extrudes sodium in exchange for external protons. The polypeptide is Na(+)/H(+) antiporter NhaA (Acidithiobacillus ferrooxidans (strain ATCC 23270 / DSM 14882 / CIP 104768 / NCIMB 8455) (Ferrobacillus ferrooxidans (strain ATCC 23270))).